Here is a 270-residue protein sequence, read N- to C-terminus: Putative pyruvate, phosphate dikinase regulatory protein (270 aa).

151–158 provides a ligand contact to ADP; it reads GVSRTSKT.

It belongs to the pyruvate, phosphate/water dikinase regulatory protein family. PDRP subfamily.

The enzyme catalyses N(tele)-phospho-L-histidyl/L-threonyl-[pyruvate, phosphate dikinase] + ADP = N(tele)-phospho-L-histidyl/O-phospho-L-threonyl-[pyruvate, phosphate dikinase] + AMP + H(+). It carries out the reaction N(tele)-phospho-L-histidyl/O-phospho-L-threonyl-[pyruvate, phosphate dikinase] + phosphate + H(+) = N(tele)-phospho-L-histidyl/L-threonyl-[pyruvate, phosphate dikinase] + diphosphate. Functionally, bifunctional serine/threonine kinase and phosphorylase involved in the regulation of the pyruvate, phosphate dikinase (PPDK) by catalyzing its phosphorylation/dephosphorylation. In Bacillus subtilis (strain 168), this protein is Putative pyruvate, phosphate dikinase regulatory protein (yqfL).